The following is a 477-amino-acid chain: Cysteine protease ATG4b (477 aa).

The segment at Ser-11–Asn-39 is disordered. Over residues Ser-25–Asn-39 the composition is skewed to polar residues. Cys-173 acts as the Nucleophile in catalysis. Catalysis depends on residues Asp-368 and His-370. The disordered stretch occupies residues Ala-453–Leu-477. Residues Glu-454–Ile-465 are compositionally biased toward low complexity.

The protein belongs to the peptidase C54 family. As to quaternary structure, interacts with ATG8a and ATG8d. As to expression, constitutively expressed.

The protein resides in the cytoplasm. The catalysed reaction is [protein]-C-terminal L-amino acid-glycyl-phosphatidylethanolamide + H2O = [protein]-C-terminal L-amino acid-glycine + a 1,2-diacyl-sn-glycero-3-phosphoethanolamine. In terms of biological role, cysteine protease that plays a key role in autophagy by mediating both proteolytic activation and delipidation of ATG8 family proteins. The protease activity is required for proteolytic activation of ATG8 family proteins: cleaves the C-terminal amino acid of ATG8 proteins to reveal a C-terminal glycine. Exposure of the glycine at the C-terminus is essential for ATG8 proteins conjugation to phosphatidylethanolamine (PE) and insertion to membranes, which is necessary for autophagy. In addition to the protease activity, also mediates delipidation of PE-conjugated ATG8 proteins. The chain is Cysteine protease ATG4b from Arabidopsis thaliana (Mouse-ear cress).